The sequence spans 536 residues: CTP synthase (536 aa).

The tract at residues 1-267 (MTKFIFVTGG…DDIVIKRLEL (267 aa)) is amidoligase domain. Ser13 contributes to the CTP binding site. UTP is bound at residue Ser13. ATP is bound at residue 14-19 (SLGKGI). Residue Tyr54 participates in L-glutamine binding. Asp71 serves as a coordination point for ATP. 2 residues coordinate Mg(2+): Asp71 and Glu141. Residues 148–150 (DIE), 188–193 (KTKPTQ), and Lys224 contribute to the CTP site. UTP contacts are provided by residues 188–193 (KTKPTQ) and Lys224. Residue 240-242 (RDA) participates in ATP binding. The Glutamine amidotransferase type-1 domain maps to 293 to 535 (TIGLVGKYVS…IEASLNHQQS (243 aa)). Gly355 contributes to the L-glutamine binding site. The active-site Nucleophile; for glutamine hydrolysis is the Cys382. Residues 383 to 386 (LGMQ), Glu406, and Arg463 each bind L-glutamine. Residues His508 and Glu510 contribute to the active site.

This sequence belongs to the CTP synthase family. Homotetramer.

The catalysed reaction is UTP + L-glutamine + ATP + H2O = CTP + L-glutamate + ADP + phosphate + 2 H(+). The enzyme catalyses L-glutamine + H2O = L-glutamate + NH4(+). It carries out the reaction UTP + NH4(+) + ATP = CTP + ADP + phosphate + 2 H(+). It functions in the pathway pyrimidine metabolism; CTP biosynthesis via de novo pathway; CTP from UDP: step 2/2. Its activity is regulated as follows. Allosterically activated by GTP, when glutamine is the substrate; GTP has no effect on the reaction when ammonia is the substrate. The allosteric effector GTP functions by stabilizing the protein conformation that binds the tetrahedral intermediate(s) formed during glutamine hydrolysis. Inhibited by the product CTP, via allosteric rather than competitive inhibition. In terms of biological role, catalyzes the ATP-dependent amination of UTP to CTP with either L-glutamine or ammonia as the source of nitrogen. Regulates intracellular CTP levels through interactions with the four ribonucleotide triphosphates. The chain is CTP synthase from Staphylococcus saprophyticus subsp. saprophyticus (strain ATCC 15305 / DSM 20229 / NCIMB 8711 / NCTC 7292 / S-41).